Here is a 305-residue protein sequence, read N- to C-terminus: MSRIVIALGGNALLQNGEKRDYETQYEHAYKTFESLRFVTEDNEVVITHGNGPQVGDIQQSHDISGIGAYLHQSVAMSQGYIGEILANAYTNIKTKYNLRKNIFTIITRVLVDENDPAFSNPEKPIGRYYSDAEVEEARKNGWIMKKFRDGWRRVVPSPDPRQILEEPVIEYLLHNGNLPIAVGGGGVPVVRKGEQIHGIDAVIDKDLASSVLATAIRADFLMILTDVDNVYVNYGKPDQKGLHEVHVEEIEKYLKEGQFGEGSMKPKVMAAIRFIKNGGKKAFITSIENSMNALSGRSGTIIVR.

Belongs to the carbamate kinase family.

The protein localises to the cytoplasm. It catalyses the reaction hydrogencarbonate + NH4(+) + ATP = carbamoyl phosphate + ADP + H2O + H(+). It functions in the pathway metabolic intermediate metabolism; carbamoyl phosphate degradation; CO(2) and NH(3) from carbamoyl phosphate: step 1/1. The protein is Carbamate kinase (arcC) of Thermoplasma acidophilum (strain ATCC 25905 / DSM 1728 / JCM 9062 / NBRC 15155 / AMRC-C165).